Here is a 341-residue protein sequence, read N- to C-terminus: D-erythrose-4-phosphate dehydrogenase (341 aa).

Residue 12–13 (RI) coordinates NAD(+). Substrate is bound by residues 154–156 (SCT), R200, 213–214 (TK), and R236. C155 functions as the Nucleophile in the catalytic mechanism. N318 lines the NAD(+) pocket.

It belongs to the glyceraldehyde-3-phosphate dehydrogenase family. Epd subfamily. As to quaternary structure, homotetramer.

The protein resides in the cytoplasm. It catalyses the reaction D-erythrose 4-phosphate + NAD(+) + H2O = 4-phospho-D-erythronate + NADH + 2 H(+). Its pathway is cofactor biosynthesis; pyridoxine 5'-phosphate biosynthesis; pyridoxine 5'-phosphate from D-erythrose 4-phosphate: step 1/5. Its function is as follows. Catalyzes the NAD-dependent conversion of D-erythrose 4-phosphate to 4-phosphoerythronate. The chain is D-erythrose-4-phosphate dehydrogenase from Edwardsiella ictaluri (strain 93-146).